The primary structure comprises 99 residues: Integration host factor subunit alpha (99 aa).

This sequence belongs to the bacterial histone-like protein family. In terms of assembly, heterodimer of an alpha and a beta chain.

Its function is as follows. This protein is one of the two subunits of integration host factor, a specific DNA-binding protein that functions in genetic recombination as well as in transcriptional and translational control. The sequence is that of Integration host factor subunit alpha from Nitrosococcus oceani (strain ATCC 19707 / BCRC 17464 / JCM 30415 / NCIMB 11848 / C-107).